A 163-amino-acid polypeptide reads, in one-letter code: Centrosomal protein of 19 kDa (163 aa).

It belongs to the CEP19 family. As to quaternary structure, interacts with CEP43; this interaction is required for its localization to the mother centriole. Interacts (via residues 121-150) with RABL2B. Interacts (via C-terminus) with CEP350; this interaction is required for its localization to the mother centriole.

It is found in the cytoplasm. It localises to the cytoskeleton. The protein resides in the microtubule organizing center. Its subcellular location is the centrosome. The protein localises to the centriole. It is found in the spindle pole. It localises to the cilium basal body. Required for ciliation. Recruits the RABL2B GTPase to the ciliary base to initiate ciliation. After specifically capturing the activated GTP-bound RABL2B, the CEP19-RABL2B complex binds intraflagellar transport (IFT) complex B from the large pool pre-docked at the base of the cilium and thus triggers its entry into the cilia. Involved in the early steps in cilia formation by recruiting the ciliary vesicles (CVs) to the distal end of the mother centriole where they fuse to initiate cilium assembly. Involved in microtubule (MT) anchoring to the centrosomes. The polypeptide is Centrosomal protein of 19 kDa (CEP19) (Homo sapiens (Human)).